Consider the following 429-residue polypeptide: Na(+)/H(+) antiporter NhaA 1 (429 aa).

Transmembrane regions (helical) follow at residues 32–52 (ISGG…NSPW), 73–93 (LSVQ…VAGL), 111–131 (VVPV…YSLL), 140–160 (GWAI…AVVG), 170–190 (FLLT…AVAY), 193–213 (ELSV…TLLV), 219–239 (AWWL…ASGV), 243–263 (VAGV…AGGP), 284–304 (VAVP…LGGL), 316–336 (VVVG…WLVA), 349–369 (WVDV…SLLI), and 383–403 (HVKV…TVVL).

This sequence belongs to the NhaA Na(+)/H(+) (TC 2.A.33) antiporter family.

The protein localises to the cell membrane. It catalyses the reaction Na(+)(in) + 2 H(+)(out) = Na(+)(out) + 2 H(+)(in). Its function is as follows. Na(+)/H(+) antiporter that extrudes sodium in exchange for external protons. The sequence is that of Na(+)/H(+) antiporter NhaA 1 from Frankia alni (strain DSM 45986 / CECT 9034 / ACN14a).